Here is a 461-residue protein sequence, read N- to C-terminus: Deoxyguanosinetriphosphate triphosphohydrolase-like protein (461 aa).

The disordered stretch occupies residues 22 to 41 (ERFLPDPPREKDNRPPFRRD). A compositionally biased stretch (basic and acidic residues) spans 24–41 (FLPDPPREKDNRPPFRRD). Positions 72-285 (RLTHSLEVAQ…MELADDIAYG (214 aa)) constitute an HD domain.

It belongs to the dGTPase family. Type 2 subfamily.

This chain is Deoxyguanosinetriphosphate triphosphohydrolase-like protein, found in Haemophilus influenzae (strain PittGG).